Consider the following 1079-residue polypeptide: Tudor domain-containing protein 7 (1079 aa).

Residues Met1–Lys69 enclose the HTH OST-type 1 domain. The interval Lys109–Pro132 is disordered. 2 HTH OST-type domains span residues Asp218 to Thr288 and Pro330 to Ser398. 2 consecutive Tudor domains span residues Pro494–Leu551 and Leu684–Asp741.

Belongs to the TDRD7 family.

The protein resides in the cytoplasm. In terms of biological role, component of specific cytoplasmic RNA granules involved in post-transcriptional regulation of specific genes: probably acts by binding to specific mRNAs and regulating their translation. Probably required during spermatogenesis. The chain is Tudor domain-containing protein 7 (tdrd7) from Xenopus laevis (African clawed frog).